A 218-amino-acid polypeptide reads, in one-letter code: Small ribosomal subunit protein uS3c (218 aa).

Residues Ile43–Glu118 enclose the KH type-2 domain.

Belongs to the universal ribosomal protein uS3 family. In terms of assembly, part of the 30S ribosomal subunit.

It is found in the plastid. The protein localises to the chloroplast. The sequence is that of Small ribosomal subunit protein uS3c (rps3) from Phalaenopsis aphrodite subsp. formosana (Moth orchid).